Reading from the N-terminus, the 303-residue chain is N-acetylmuramic acid 6-phosphate etherase (303 aa).

The segment at 1–21 (MQPSQLRSLTTESRNPNTMGI) is disordered. The SIS domain maps to 58–221 (AYDSISNGGR…STSVMIRQGK (164 aa)). Glutamate 86 functions as the Proton donor in the catalytic mechanism. The active site involves glutamate 117.

Belongs to the GCKR-like family. MurNAc-6-P etherase subfamily. Homodimer.

The catalysed reaction is N-acetyl-D-muramate 6-phosphate + H2O = N-acetyl-D-glucosamine 6-phosphate + (R)-lactate. It participates in amino-sugar metabolism; N-acetylmuramate degradation. Its function is as follows. Specifically catalyzes the cleavage of the D-lactyl ether substituent of MurNAc 6-phosphate, producing GlcNAc 6-phosphate and D-lactate. The sequence is that of N-acetylmuramic acid 6-phosphate etherase from Bacillus pumilus (strain SAFR-032).